Reading from the N-terminus, the 140-residue chain is Putative nickel-responsive regulator 2 (140 aa).

The Ni(2+) site is built by histidine 77, histidine 88, histidine 90, and cysteine 96.

Belongs to the transcriptional regulatory CopG/NikR family. Requires Ni(2+) as cofactor.

In terms of biological role, transcriptional regulator. The protein is Putative nickel-responsive regulator 2 of Methanothermobacter thermautotrophicus (strain ATCC 29096 / DSM 1053 / JCM 10044 / NBRC 100330 / Delta H) (Methanobacterium thermoautotrophicum).